Reading from the N-terminus, the 236-residue chain is ASEDGGRGPYVQADLAYAYEHITHDYPKPTDPSKGKISTVSDYFRNIRTHSIHPRVSVGYDFGGWRIAADYARYRKWSDNKYSVSIKNMRVHKHNSNRKNLKTENQENGSFHAVSSLGLSAIYDFQINDKFKPYIGARVAYGHVRHSIDSTKKITGLLTTSTPGIMSGVYKVLRTPGAHRESDSIRRVGLGVIAGVGFDITPKLTLDAGYRYHNWGRLENTRFKTHEASLGVRYRF.

Residue A1 is a signal peptide.

This sequence belongs to the opacity porin family.

Its subcellular location is the cell outer membrane. In terms of biological role, implicated in a number of adherence functions. OPA proteins are implicated in pathogenesis and are subject to phase variation. The protein is Opacity protein opA50 (opaC) of Neisseria gonorrhoeae.